Here is a 2219-residue protein sequence, read N- to C-terminus: E3 ubiquitin-protein ligase Ubr3 (2219 aa).

Disordered stretches follow at residues 1–48 (MDED…DLSS) and 78–134 (AAGA…SALS). Residues 20–29 (VREQTHHPPM) are compositionally biased toward basic and acidic residues. Over residues 31–42 (EDQELDNEDGSS) the composition is skewed to acidic residues. Low complexity predominate over residues 114-134 (GPTTTTSSGTAAESGAASALS). A UBR-type zinc finger spans residues 222–293 (AKCGLVWVPH…AEGFCSDHGI (72 aa)). Disordered regions lie at residues 1348 to 1367 (SFSL…TMDV) and 1440 to 1464 (QREK…KARE). Acidic residues predominate over residues 1353–1367 (DGEDQSSDDDSTMDV). The RING-type; degenerate zinc finger occupies 1607–1643 (CGHHVHLSCLEAYLKTLYTTQRQPVQDRGEFYCPVCR). 2 disordered regions span residues 1872 to 1902 (VGSD…QQQQ) and 1935 to 1954 (SAAA…HGAS). Over residues 1877 to 1888 (SAAESQQQESAA) the composition is skewed to low complexity.

The protein belongs to the E3 ubiquitin-protein ligase UBR1-like family. As to quaternary structure, selectively interacts (via UBR-type zinc finger) with the cleaved form of Diap1; this interaction is enhanced by tal. Interacts with tal and Rrp1. Interacts with ovo isoform B (via N-terminus). Interacts with Cad99C (via the cytoplasmic domain). Interacts with ck and Sans. Interacts with cos (via Kinesin motor domain). Post-translationally, in vitro, self-ubiquitination in the presence of E1, E2 and ubiquitin.

The protein localises to the cytoplasm. It localises to the nucleus. It carries out the reaction S-ubiquitinyl-[E2 ubiquitin-conjugating enzyme]-L-cysteine + [acceptor protein]-L-lysine = [E2 ubiquitin-conjugating enzyme]-L-cysteine + N(6)-ubiquitinyl-[acceptor protein]-L-lysine.. It participates in protein modification; protein ubiquitination. E3 ubiquitin-protein ligase which is a component of the N-end rule pathway. Recognizes and binds to proteins bearing specific N-terminal residues, leading to their ubiquitination and subsequent degradation. Binds to the E3 ubiquitin-protein ligase Diap1 and enhances its ubiquitination and anti-apoptotic functions. Essential during trichome development for the ubiquitination of the N-terminus of ovo isoform B (svb), converting it from a transcriptional inhibitor to an activator. Positively regulates a hh-signaling pathway which functions in photoreceptor differentiation. Activation of hh up-regulates transcription of Ubr3, which in turn promotes hh signaling by mediating the ubiquitination and degradation of cos. Necessary for auditory transduction: plays a role in Johnston's organ organization by acting in the regulation of zip and ck function in scolopidial apical attachment. Likely to function by acting in a pathway that negatively regulates the ubiquitination of zip, consequently affecting its interaction with ck. May also negatively regulate a component of the SCF (SKP1-CUL1-F-box protein) E3 ubiquitin-protein ligase complex Cul1, which also appears to function in the negative regulation of the zip-ck interaction and scolopidial apical attachment. This Drosophila melanogaster (Fruit fly) protein is E3 ubiquitin-protein ligase Ubr3.